A 209-amino-acid polypeptide reads, in one-letter code: NAD(P)H dehydrogenase (quinone) (209 aa).

In terms of domain architecture, Flavodoxin-like spans V4–V199. FMN contacts are provided by residues S10 to I15 and T87 to Y89. Residue W107 coordinates substrate. FMN-binding positions include S122–G128 and H143.

The protein belongs to the WrbA family. It depends on FMN as a cofactor.

The enzyme catalyses a quinone + NADH + H(+) = a quinol + NAD(+). The catalysed reaction is a quinone + NADPH + H(+) = a quinol + NADP(+). This chain is NAD(P)H dehydrogenase (quinone), found in Methanosarcina mazei (strain ATCC BAA-159 / DSM 3647 / Goe1 / Go1 / JCM 11833 / OCM 88) (Methanosarcina frisia).